The primary structure comprises 82 residues: Small ribosomal subunit protein uS17 (82 aa).

It belongs to the universal ribosomal protein uS17 family. In terms of assembly, part of the 30S ribosomal subunit.

One of the primary rRNA binding proteins, it binds specifically to the 5'-end of 16S ribosomal RNA. The sequence is that of Small ribosomal subunit protein uS17 from Paracoccus denitrificans (strain Pd 1222).